Reading from the N-terminus, the 911-residue chain is General transcription factor 3C polypeptide 2 (911 aa).

2 disordered regions span residues 24–187 (DSPG…RRRA) and 205–297 (ALPA…MAPN). Residues 35–46 (DVKTSSEMTSAE) are compositionally biased toward polar residues. A Phosphoserine modification is found at Ser63. Positions 64–81 (PDQRRLPPEQESLSRLEQ) are enriched in basic and acidic residues. Over residues 92–112 (SKPRASKPGRKRGGRTRKGPK) the composition is skewed to basic residues. The span at 114–123 (PQQPNPPSAP) shows a compositional bias: pro residues. Ser132, Ser165, Ser167, Ser220, and Ser260 each carry phosphoserine. Residues 253–262 (EAEDVEESEG) show a composition bias toward acidic residues. Over residues 263–277 (PSESSSEPEPVVPRS) the composition is skewed to low complexity. WD repeat units follow at residues 366 to 426 (PEDG…MNET), 427 to 483 (HPLS…AWEL), 484 to 535 (PGTP…IYKV), 536 to 603 (QCVA…SLKL), 604 to 654 (YPFQ…NSIK), and 655 to 690 (RFLSTELAWLLPYNGVTVAQDNCYASYGLCGIHYID). A Phosphoserine modification is found at Ser597. The disordered stretch occupies residues 765–785 (SPEGPDHSSASSGVPNPPKAR). Phosphoserine occurs at positions 871, 892, and 893. The tract at residues 889-911 (FQPSSPTRRPGFSPTSHRLLPTP) is disordered. Thr895 is modified (phosphothreonine). Residue Ser901 is modified to Phosphoserine.

As to quaternary structure, part of the TFIIIC subcomplex TFIIIC2, consisting of six subunits, GTF3C1, GTF3C2, GTF3C3, GTF3C4, GTF3C5 and GTF3C6.

It is found in the nucleus. Its function is as follows. Required for RNA polymerase III-mediated transcription. Component of TFIIIC that initiates transcription complex assembly on tRNA and is required for transcription of 5S rRNA and other stable nuclear and cytoplasmic RNAs. May play a direct role in stabilizing interactions of TFIIIC2 with TFIIIC1. This is General transcription factor 3C polypeptide 2 (GTF3C2) from Homo sapiens (Human).